The following is a 97-amino-acid chain: HssA/B-like protein 32 (97 aa).

Disordered stretches follow at residues 1 to 23 (MTLF…SLAS) and 62 to 97 (AKSS…GSCS). Gly residues predominate over residues 62-74 (AKSSGGSCGGKGG). The segment covering 75 to 88 (SHNHGHGHGPHGHG) has biased composition (basic residues).

It belongs to the hssA/B family.

The sequence is that of HssA/B-like protein 32 (hssl32) from Dictyostelium discoideum (Social amoeba).